The following is a 284-amino-acid chain: uncharacterized protein (284 aa).

Residues 25 to 123 (PILVMHGGHS…NTLTLQSAVT (99 aa)) form the AB hydrolase-1 domain. S96 is an active-site residue.

This sequence belongs to the AB hydrolase superfamily.

This is an uncharacterized protein from Bacillus subtilis (strain 168).